The following is a 151-amino-acid chain: Protein SprT-like (151 aa).

Positions 6–147 (LQRMVENLSE…GHCNGKLRMK (142 aa)) constitute a SprT-like domain. Residue histidine 67 coordinates Zn(2+). Glutamate 68 is an active-site residue. Residue histidine 71 participates in Zn(2+) binding.

The protein belongs to the SprT family. The cofactor is Zn(2+).

The protein localises to the cytoplasm. The polypeptide is Protein SprT-like (Staphylococcus aureus (strain MRSA252)).